A 598-amino-acid chain; its full sequence is Movement protein Hsp70h (598 aa).

It belongs to the heat shock protein 70 family. In terms of assembly, homomultimer. Interacts with p20. This interaction allows the docking of the latter to the virion.

It is found in the virion. It localises to the host cell junction. The protein localises to the host plasmodesma. Functionally, transports viral genome to neighboring plant cells directly through plasmosdesmata, without any budding. The movement protein allows efficient cell to cell propagation, by bypassing the host cell wall barrier. Two movement proteins, p6, Hsp70h and three structural proteins, CP, CPm, and P64 are essential for cell-cell movement. Also plays a role in virion formation. Together with CPm and p64, encapsidates the 5'-terminal portion of the viral genome. This is Movement protein Hsp70h from Beta vulgaris (Sugar beet).